Reading from the N-terminus, the 310-residue chain is Protein YIP5 (310 aa).

The segment at 1–84 (MPSNNSSFLD…VIGQNDNDGL (84 aa)) is disordered. Acidic residues predominate over residues 10–22 (DIDDDLEGVDDFG). The segment covering 35 to 57 (DSPNMNNSTAGKGSEFYNTTGSK) has biased composition (polar residues). Residue Ser-60 is modified to Phosphoserine. The next 5 membrane-spanning stretches (helical) occupy residues 131-151 (TDLYGAVWITATVVMINFTMS), 181-201 (LHSIWLFYGYTFGVPFITMQV), 220-240 (LISVYGYANLIWIPVCVILNI), 249-269 (TVQAIQWAIVALGWAQSSYFL), and 290-310 (SIIVVVALHTLFCLLFRFIIF).

This sequence belongs to the YIP1 family. In terms of assembly, interacts with SNX3, TVP18, TVP23, YIP1 and YIP4. Interacts with SEC4; The C-terminal cysteines in the Rab GTPase SEC4 are essential for the interaction. Interacts with YPT1, YPT6, YPT7, YPT10, YPT11, YPT31, YPT32 and YPT52; These proteins are all Rab GTPases.

Its subcellular location is the membrane. In terms of biological role, possible role in vesicle-mediated transport. May be involved in proper membrane localization of Rab GTPases. This is Protein YIP5 (YIP5) from Saccharomyces cerevisiae (strain ATCC 204508 / S288c) (Baker's yeast).